The following is a 277-amino-acid chain: Urease accessory protein UreD (277 aa).

This sequence belongs to the UreD family. In terms of assembly, ureD, UreF and UreG form a complex that acts as a GTP-hydrolysis-dependent molecular chaperone, activating the urease apoprotein by helping to assemble the nickel containing metallocenter of UreC. The UreE protein probably delivers the nickel.

Its subcellular location is the cytoplasm. Functionally, required for maturation of urease via the functional incorporation of the urease nickel metallocenter. This is Urease accessory protein UreD from Pseudomonas putida (strain GB-1).